The following is a 595-amino-acid chain: MKNIRNFSIIAHIDHGKSTIADCFIQFCGGLSDREMSSQVLDSMDIEKERGITIKSQSVTLDYHAKNGETYQLNFIDTPGHVDFSYEVSRSLSACEGALLIVDASQGVEAQTVANCYTALEQGLQVVSVLNKIDLPAADPERVMDEIEDVIGVEAHDVVHASAKLGIGIEDILEQIVERIPTPKGNINAPIKALIIDSWFDSYLGVVSLIRMIDGEIKIKTKIKIFSNGGEYIVDEVGIFTPKRKRIDSLKAGEVGFLIANIKNIDGAPVGDTITSAENPASESLEGFRPVQPCVFAGIFPISGKDYEKFRDALAKLRLNDAALQYEPENSDVLGFGFRIGFLGLLHMEIVQERLEREYDLDLIITAPTVIYEILDTKGIIHRVDSLSKMPTNQSISKFREPIITAKILVISKYVGAVMNLCIEKRGIQKNIIYMSRQVSLIYELPLNEVVLDFFDRLKSVSRGFASMDYHFERYQESDLICLDVMINQEPVDALALIMHRDDSVRKGNELVEKMKELIPRQMFDVTIQACIGSKIISRSNVKALRKNVTAKCYGGDVSRKKKLLDKQNKGKKRMRSVGRVDIPKEVFLAILHIN.

The tr-type G domain occupies 2-184 (KNIRNFSIIA…QIVERIPTPK (183 aa)). GTP contacts are provided by residues 14–19 (DHGKST) and 131–134 (NKID).

Belongs to the TRAFAC class translation factor GTPase superfamily. Classic translation factor GTPase family. LepA subfamily.

The protein resides in the cell inner membrane. The enzyme catalyses GTP + H2O = GDP + phosphate + H(+). Functionally, required for accurate and efficient protein synthesis under certain stress conditions. May act as a fidelity factor of the translation reaction, by catalyzing a one-codon backward translocation of tRNAs on improperly translocated ribosomes. Back-translocation proceeds from a post-translocation (POST) complex to a pre-translocation (PRE) complex, thus giving elongation factor G a second chance to translocate the tRNAs correctly. Binds to ribosomes in a GTP-dependent manner. The protein is Elongation factor 4 of Vesicomyosocius okutanii subsp. Calyptogena okutanii (strain HA).